Here is a 411-residue protein sequence, read N- to C-terminus: Secretion apparatus protein BsaZ (411 aa).

4 helical membrane-spanning segments follow: residues 28–48, 80–100, 137–157, and 175–195; these read IVALIVIATGALAAPALVDLT, IAAPFVLLCAAAGALPSLVQS, ALLYVGVFALTVRVFAGLYHA, and IVLTVRLVLLFLLCALPVLIL. The disordered stretch occupies residues 341–411; it reads AANRGGPPPE…APARTGDQNA (71 aa). The segment covering 370–404 has biased composition (low complexity); it reads DACADNAFPDDAPPGAAAPNAGSPDGPAPDGGAPA.

Belongs to the type III secretion exporter family.

It localises to the cell membrane. Functionally, part of the bsa type III secretion system, is involved in the intracellular replication of invading bacteria inside the host cell. Probably necessary for the lysis of the vacuole membrane and escape into the host cell cytoplasm. In Burkholderia pseudomallei (strain 1710b), this protein is Secretion apparatus protein BsaZ (bsaZ).